Consider the following 556-residue polypeptide: Set1/Ash2 histone methyltransferase complex subunit ASH2 (556 aa).

The segment covering 1–19 (MEDSQMDTSSPTESSSEVN) has biased composition (polar residues). The tract at residues 1–27 (MEDSQMDTSSPTESSSEVNFTAEEDKS) is disordered. A PHD-type zinc finger spans residues 34-90 (AGVCYCGKERNLNIVELLCATCSRWVHETCVSYQLGKGKLLPFITNYVFVCKNCSAS). C37, C39, C52, C55, H60, C63, C84, and C87 together coordinate Zn(2+). The disordered stretch occupies residues 216 to 251 (ASLSKNNRQKRKFPGTDSGPTGKKGRPSSDITANVK). The region spanning 288–510 (SSDWAGKPIP…VSVNFGPAFK (223 aa)) is the B30.2/SPRY domain.

In terms of assembly, core component of several methyltransferase-containing complexes. Component of the SET1C/COMPASS complex, composed at least of the catalytic subunit Set1, wds/WDR5, Wdr82, Rbbp5, ash2, Cfp1/CXXC1, hcf and Dpy-30L1. Component of the MLL3/4 (Histone-lysine N-methyltransferase/demethylase TRR) complex composed at least of the catalytic subunit trr, ash2, Rbbp5, Dpy-30L1, wds, hcf, ptip, Pa1, Utx, Lpt and Ncoa6. Interacts with hcf. Interacts with trr. Interacts (via B30.2/SPRY domain) with sktl; the interaction is direct. In terms of tissue distribution, in larvae and pupae, expressed in imaginal disks, salivary gland and fat body cells. No expression detected in central nervous system (at protein level).

Its subcellular location is the nucleus. It localises to the chromosome. In terms of biological role, transcriptional regulator. Regulates a number of genes involved in wing development including activation of net and bs and repression of rho and kni and controls vein-intervein patterning during wing development. Required for correct expression of a number of homeotic genes including Scr in the first leg imaginal disk and Ubx in the third leg imaginal disk and haltere disks. Required for stabilization of the histone-lysine N-methyltransferase trr and for trimethylation of 'Lys-4' of histone H3. Together with sktl probably plays a role in maintenance of transcriptionally active chromatin through down-regulation of histone H1 hyperphosphorylation. The chain is Set1/Ash2 histone methyltransferase complex subunit ASH2 from Drosophila melanogaster (Fruit fly).